The sequence spans 875 residues: Aminopeptidase M1-B (875 aa).

A required for membrane association region spans residues 96-203 (IGEGVLKMDF…MSTYLVAIVV (108 aa)). Substrate contacts are provided by residues E136 and 269–273 (GAMEN). H305 is a binding site for Zn(2+). The active-site Proton acceptor is E306. The Zn(2+) site is built by H309 and E328. The short motif at 722–723 (LL) is the Dileucine internalization motif element.

The protein belongs to the peptidase M1 family. In terms of assembly, homodimer. Zn(2+) serves as cofactor.

Its subcellular location is the membrane. It is found in the microsome membrane. It localises to the cytoplasm. The enzyme catalyses Release of an N-terminal amino acid, Xaa-|-Yaa- from a peptide, amide or arylamide. Xaa is preferably Ala, but may be most amino acids including Pro (slow action). When a terminal hydrophobic residue is followed by a prolyl residue, the two may be released as an intact Xaa-Pro dipeptide.. In Oryza sativa subsp. japonica (Rice), this protein is Aminopeptidase M1-B.